We begin with the raw amino-acid sequence, 448 residues long: tRNA(Ile)-lysidine synthase (448 aa).

25–30 (SGGSDS) contributes to the ATP binding site.

Belongs to the tRNA(Ile)-lysidine synthase family.

Its subcellular location is the cytoplasm. The enzyme catalyses cytidine(34) in tRNA(Ile2) + L-lysine + ATP = lysidine(34) in tRNA(Ile2) + AMP + diphosphate + H(+). Ligates lysine onto the cytidine present at position 34 of the AUA codon-specific tRNA(Ile) that contains the anticodon CAU, in an ATP-dependent manner. Cytidine is converted to lysidine, thus changing the amino acid specificity of the tRNA from methionine to isoleucine. This chain is tRNA(Ile)-lysidine synthase, found in Brucella melitensis biotype 2 (strain ATCC 23457).